Here is a 283-residue protein sequence, read N- to C-terminus: Agmatinase (283 aa).

Positions 112, 131, 133, 135, 211, and 213 each coordinate a divalent metal cation.

Belongs to the arginase family. Agmatinase subfamily. Homotetramer. Requires a divalent metal cation as cofactor.

It catalyses the reaction agmatine + H2O = urea + putrescine. It functions in the pathway amine and polyamine biosynthesis; putrescine biosynthesis via agmatine pathway; putrescine from agmatine: step 1/1. Inhibited by putrescine. Activity is not affected by arginine and ornithine. Functionally, catalyzes the formation of putrescine from agmatine. Cannot use arginine. This Pyrococcus horikoshii (strain ATCC 700860 / DSM 12428 / JCM 9974 / NBRC 100139 / OT-3) protein is Agmatinase.